A 4080-amino-acid polypeptide reads, in one-letter code: Hybrid PKS-NRPS synthetase poxE (4080 aa).

The Ketosynthase family 3 (KS3) domain occupies 8–442 (REPIAIVGSG…GTNAHAIIEA (435 aa)). Residues Cys-181, His-320, and His-362 each act as for beta-ketoacyl synthase activity in the active site. Residues 554–878 (VFTGQGAQWA…QRGMNDVEAM (325 aa)) are malonyl-CoA:ACP transacylase (MAT) domain. Residues 944-1078 (HPILGTRCPD…GRLVITYGPV (135 aa)) are N-terminal hotdog fold. The 303-residue stretch at 944 to 1246 (HPILGTRCPD…AVPLEATNAD (303 aa)) folds into the PKS/mFAS DH domain. Positions 945–1243 (PILGTRCPDG…GIHAVPLEAT (299 aa)) are dehydratase (DH) domain. The active-site Proton acceptor; for dehydratase activity is His-976. The segment at 1093-1246 (MVDVPSERFY…AVPLEATNAD (154 aa)) is C-terminal hotdog fold. Asp-1152 (proton donor; for dehydratase activity) is an active-site residue. The segment at 1400–1585 (HFSDYLASVV…GVDTFTSDAD (186 aa)) is methyltransferase (MT) domain. A ketoreductase (KR)domain region spans residues 2118–2292 (TYWLVGLTGS…AGSVMNIGAI (175 aa)). Residues 2399 to 2478 (TTDEIYEVIK…TIGEIIKFVL (80 aa)) are peptidyl carrier protein. One can recognise a Carrier 1 domain in the interval 2405–2481 (EVIKECFIVK…EIIKFVLEKL (77 aa)). O-(pantetheine 4'-phosphoryl)serine is present on Ser-2441. The tract at residues 2488–2569 (SLGLSPPTGA…AASPSIHTEE (82 aa)) is disordered. Positions 2511–2525 (VVVERRNVPRLEKKI) are enriched in basic and acidic residues. Over residues 2528 to 2545 (SAGSRTSSSVTGTSKSVS) the composition is skewed to low complexity. The segment covering 2551–2565 (DTASSQTSEAASPSI) has biased composition (polar residues). The segment at 2607–3036 (KEPLSFGQSR…DSKQPGGHVS (430 aa)) is condensation. The interval 3069-3478 (DMAKQYPQKL…DGRLRIEGRI (410 aa)) is adenylation. In terms of domain architecture, Carrier 2 spans 3593–3673 (AHLNEAQAQM…KMALLIKPQE (81 aa)). The tract at residues 3598-3670 (AQAQMVQLWE…TLEKMALLIK (73 aa)) is thiolation. Position 3633 is an O-(pantetheine 4'-phosphoryl)serine (Ser-3633). Residues 3740–3959 (LTGATGFIGQ…DFVPVEQVVR (220 aa)) form a reductase (RED) domain region.

In the C-terminal section; belongs to the NRP synthetase family.

It functions in the pathway secondary metabolite biosynthesis. In terms of biological role, hybrid PKS-NRPS synthetase; part of the gene cluster that mediates the biosynthesis of oxaleimides, cytotoxic compounds containing an unusual disubstituted succinimide moiety. The first step of the pathway is provided by the HR-PKS poxF that serves in a new mode of collaborative biosynthesis with the PKS-NRPS poxE, by providing the olefin containing amino acid substrate via the synthesis of an ACP-bound dec-4-enoate. The cytochrome P450 monooxygenase poxM-catalyzed oxidation at the alpha-position creates the enzyme-bound 2-hydroxydec-4-enoyl-ACP thioester, which may be prone to spontaneous hydrolysis to yield 2-hydroxydec-4-enoic acid due to increased electrophilicity of the carbonyl. 2-hydroxydec-4-enoic acid can then be further oxidized by poxM to yield the alpha-ketoacid 2-oxodec-4-enoicacid, which is reductively aminated by the aminotransferase poxL to yield (S,E)-2-aminodec-4-enoic acid. The Hybrid PKS-NRPS synthetase poxE then performs condensation between the octaketide product of its PKS modules and the amino group of (S,E)-2-aminodec-4-enoic acid which is activated and incorporated by the adenylation domain. The resulting aminoacyl product can be cyclized by the Diels-Alderase PoxQ and reductively released by the reductive (R) domain of poxE to yield an aldehyde intermediate. The released aldehyde is then substrate for a Knoevenagel condensation by the hydrolyase poxO followed by an oxidation at the 5-position of the pyrrolidone ring. The presence of the olefin from the amino acid building block allows for migration of the substituted allyl group to occur. This allylic transposition reaction takes place in a conjugate addition, semipinacol-like fashion to yield a succinimide intermediate. Iterative two-electron oxidations of the C7 methyl of the succinimide intermediate to the carboxylic acid can be catalyzed by one of two remaining cytochrome P450 monooxygenasess poxC or poxD to yield oxaleimide A. Subsequent oxidation yields the maleimide scaffold oxaleimide I. Both oxaleimide A and oxaleimide I can undergo oxidative modifications in the decalin ring to yield the series of products oxaleimides B to H. The sequence is that of Hybrid PKS-NRPS synthetase poxE from Penicillium oxalicum.